A 529-amino-acid chain; its full sequence is Tyrosine-protein kinase Fgr (529 aa).

Residue glycine 2 is the site of N-myristoyl glycine attachment. S-palmitoyl cysteine attachment occurs at residues cysteine 3 and cysteine 6. Tyrosine 34 is modified (phosphotyrosine). One can recognise an SH3 domain in the interval 77–138 (IGVTLFIALY…PSNYVAPVDS (62 aa)). The SH2 domain maps to 144–241 (WYFGKIGRKD…GLCNLLIAPC (98 aa)). Residue tyrosine 208 is modified to Phosphotyrosine. At serine 218 the chain carries Phosphoserine. Residues 263–516 (ITLERRLGTG…YLQSFLEDYF (254 aa)) form the Protein kinase domain. Residues 269–277 (LGTGCFGDV) and lysine 291 each bind ATP. The active-site Proton acceptor is aspartate 382. Tyrosine 412 bears the Phosphotyrosine mark. Tyrosine 523 carries the post-translational modification Phosphotyrosine; by SRC.

This sequence belongs to the protein kinase superfamily. Tyr protein kinase family. SRC subfamily. As to quaternary structure, interacts with ITGB1, ITGB2, MS4A2/FCER1B, FCER1G, FCGR2A and/or FCGR2B. Interacts (via SH2 domain) with SYK (tyrosine phosphorylated). Interacts (via SH2 domain) with FLT3 (tyrosine phosphorylated). Interacts with PTK2/FAK1. Interacts (via SH2 domain) with HCLS1 (tyrosine phosphorylated by SYK). Interacts with SIRPA and PTPNS1. Interacts (not phosphorylated on tyrosine residues) with CBL; FGR tyrosine phosphorylation promotes dissociation. Interacts with PIK3R1 and FASLG. Interacts with CLNK. Post-translationally, ubiquitinated. Becomes ubiquitinated in response to ITGB2 signaling; this does not lead to degradation. Phosphorylated. Autophosphorylated on tyrosine residues. Becomes phosphorylated in response to FCGR2A and/or FCGR2B engagement, cell adhesion and signaling by ITGB2. Prior phosphorylation at Tyr-523 by SRC inhibits ulterior autophosphorylation at Tyr-412. In terms of tissue distribution, detected in neutrophils, monocytes and natural killer cells (at protein level). Detected in monocytes and large lymphocytes.

It localises to the cell membrane. Its subcellular location is the cell projection. It is found in the ruffle membrane. The protein localises to the cytoplasm. The protein resides in the cytosol. It localises to the cytoskeleton. Its subcellular location is the mitochondrion inner membrane. It is found in the mitochondrion intermembrane space. It catalyses the reaction L-tyrosyl-[protein] + ATP = O-phospho-L-tyrosyl-[protein] + ADP + H(+). Activated by autophosphorylation. Prior phosphorylation at Tyr-523 by SRC inhibits ulterior autophosphorylation at Tyr-412. Activated by phorbol myristate acetate, phosphatidic acid and poly-Lys. Binding (via SH2 domain) of HCLS1 that is already phosphorylated by SYK strongly increases kinase activity. Its function is as follows. Non-receptor tyrosine-protein kinase that transmits signals from cell surface receptors devoid of kinase activity and contributes to the regulation of immune responses, including neutrophil, monocyte, macrophage and mast cell functions, cytoskeleton remodeling in response to extracellular stimuli, phagocytosis, cell adhesion and migration. Promotes mast cell degranulation, release of inflammatory cytokines and IgE-mediated anaphylaxis. Acts downstream of receptors that bind the Fc region of immunoglobulins, such as MS4A2/FCER1B, FCGR2A and/or FCGR2B. Acts downstream of ITGB1 and ITGB2, and regulates actin cytoskeleton reorganization, cell spreading and adhesion. Depending on the context, activates or inhibits cellular responses. Functions as a negative regulator of ITGB2 signaling, phagocytosis and SYK activity in monocytes. Required for normal ITGB1 and ITGB2 signaling, normal cell spreading and adhesion in neutrophils and macrophages. Functions as a positive regulator of cell migration and regulates cytoskeleton reorganization via RAC1 activation. Phosphorylates SYK (in vitro) and promotes SYK-dependent activation of AKT1 and MAP kinase signaling. Phosphorylates PLD2 in antigen-stimulated mast cells, leading to PLD2 activation and the production of the signaling molecules lysophosphatidic acid and diacylglycerol. Promotes activation of PIK3R1. Phosphorylates FASLG, and thereby regulates its ubiquitination and subsequent internalization. Phosphorylates ABL1. Promotes phosphorylation of CBL, CTTN, PIK3R1, PTK2/FAK1, PTK2B/PYK2 and VAV2. Phosphorylates HCLS1 that has already been phosphorylated by SYK, but not unphosphorylated HCLS1. Together with CLNK, it acts as a negative regulator of natural killer cell-activating receptors and inhibits interferon-gamma production. This Homo sapiens (Human) protein is Tyrosine-protein kinase Fgr (FGR).